The primary structure comprises 483 residues: Beta-glucosidase 4 (483 aa).

A beta-D-glucoside contacts are provided by residues Gln-29, His-131, 176–177, Tyr-310, and Glu-380; that span reads NE. The Proton donor role is filled by Glu-177. The active-site Nucleophile is the Glu-380. The N-linked (GlcNAc...) asparagine glycan is linked to Asn-398. A beta-D-glucoside contacts are provided by residues Trp-429, 436-437, and Phe-445; that span reads EW.

This sequence belongs to the glycosyl hydrolase 1 family.

It catalyses the reaction Hydrolysis of terminal, non-reducing beta-D-glucosyl residues with release of beta-D-glucose.. This chain is Beta-glucosidase 4 (BGLU4), found in Oryza sativa subsp. japonica (Rice).